We begin with the raw amino-acid sequence, 283 residues long: Pantothenate synthetase (283 aa).

Residue 30 to 37 (MGNLHDGH) participates in ATP binding. H37 (proton donor) is an active-site residue. (R)-pantoate is bound at residue Q61. Q61 is a beta-alanine binding site. 149 to 152 (GEKD) contacts ATP. Residue Q155 participates in (R)-pantoate binding. ATP contacts are provided by residues V178 and 186-189 (LSSR).

It belongs to the pantothenate synthetase family. Homodimer.

Its subcellular location is the cytoplasm. The enzyme catalyses (R)-pantoate + beta-alanine + ATP = (R)-pantothenate + AMP + diphosphate + H(+). It participates in cofactor biosynthesis; (R)-pantothenate biosynthesis; (R)-pantothenate from (R)-pantoate and beta-alanine: step 1/1. Catalyzes the condensation of pantoate with beta-alanine in an ATP-dependent reaction via a pantoyl-adenylate intermediate. The polypeptide is Pantothenate synthetase (Salmonella arizonae (strain ATCC BAA-731 / CDC346-86 / RSK2980)).